Consider the following 129-residue polypeptide: Small ribosomal subunit protein uS11 (129 aa).

It belongs to the universal ribosomal protein uS11 family. In terms of assembly, part of the 30S ribosomal subunit. Interacts with proteins S7 and S18. Binds to IF-3.

Its function is as follows. Located on the platform of the 30S subunit, it bridges several disparate RNA helices of the 16S rRNA. Forms part of the Shine-Dalgarno cleft in the 70S ribosome. This is Small ribosomal subunit protein uS11 from Psychrobacter arcticus (strain DSM 17307 / VKM B-2377 / 273-4).